The following is a 354-amino-acid chain: Serum paraoxonase/lactonase 3 (354 aa).

Cysteine 42 and cysteine 352 are joined by a disulfide. A glycan (N-linked (GlcNAc...) asparagine) is linked at asparagine 50. Glutamate 53 and aspartate 54 together coordinate Ca(2+). The Proton acceptor role is filled by histidine 114. Isoleucine 116 is a Ca(2+) binding site. Serine 165 bears the Phosphoserine mark. 5 residues coordinate Ca(2+): asparagine 167, asparagine 168, asparagine 223, aspartate 268, and asparagine 269. Residue asparagine 269 is glycosylated (N-linked (GlcNAc...) asparagine).

Belongs to the paraoxonase family. As to quaternary structure, homodimer. Ca(2+) serves as cofactor. Post-translationally, glycosylated. In terms of processing, the signal sequence is not cleaved.

It is found in the secreted. The protein localises to the extracellular space. The catalysed reaction is a phenyl acetate + H2O = a phenol + acetate + H(+). The enzyme catalyses An aryl dialkyl phosphate + H2O = dialkyl phosphate + an aryl alcohol.. It carries out the reaction an N-acyl-L-homoserine lactone + H2O = an N-acyl-L-homoserine + H(+). Functionally, has low activity towards the organophosphate paraxon and aromatic carboxylic acid esters. Rapidly hydrolyzes lactones such as statin prodrugs (e.g. lovastatin). Hydrolyzes aromatic lactones and 5- or 6-member ring lactones with aliphatic substituents but not simple lactones or those with polar substituents. The sequence is that of Serum paraoxonase/lactonase 3 (PON3) from Oryctolagus cuniculus (Rabbit).